Here is a 324-residue protein sequence, read N- to C-terminus: Dioxygenase tasH (324 aa).

Positions 1–25 are cleaved as a signal peptide; it reads MRSMSLWMLIGPVTGIATWASLRYA. Residues His50, His96, and His284 each coordinate Zn(2+).

This sequence belongs to the DODA-type extradiol aromatic ring-opening dioxygenase family. Monomer. Requires Zn(2+) as cofactor.

Its function is as follows. Dioxygenase; part of the gene cluster that mediates the biosynthesis of the tetramic acids Sch210971 and Sch210972, potential anti-HIV fungal natural product that contain a decalin core. The PKS module of tasS together with the enoylreductase tasC catalyze the formation of the polyketide unit which is then conjugated to 4-hydroxyl-4-methyl glutamate (HMG) by the condensation domain of the tasS NRPS module. One unique structural feature of Sch210971 and Sch210972 is the tetramic acid motif proposed to be derived from the non-proteinogenic amino acid HMG, by a Dieckmann-type condensation catalyzed by the reductase domain of tasS. The aldolase tasA catalyzes the aldol condensation of 2 molecules of pyruvic acid to yield the intermediate 4-hydroxyl-4-methyl-2-oxoglutarate (HMOG), which can then be stereoselectively transaminated, may be by tasG, to form HMG. The Diels-Alderase tas3 then uses the Dieckmann product of tasS as substrate and catalyzes the Diels-Alder cycloaddition to form the decalin ring of Sch210971 and Sch210972. This is Dioxygenase tasH from Hapsidospora irregularis.